We begin with the raw amino-acid sequence, 1041 residues long: Cullin-associated NEDD8-dissociated protein 1, C-terminal part (1041 aa).

2 disordered regions span residues 1–24 and 64–103; these read MSSD…ELRE and DMGE…EGGY. The span at 9–24 shows a compositional bias: basic and acidic residues; it reads YSHDDEHDPQTDELRE. Residues 65 to 103 show a composition bias toward acidic residues; it reads MGEDEEMSGTQDDGSEDDVTEEPDLEDDDFEDFEEEGGY. One copy of the HEAT 1 repeat lies at 138-176; sequence SLYQQIAPAIVARFNKEREESVKLELVSTMDALVRKTAE. The tract at residues 189–237 is disordered; it reads SVGSGSKISRKRRRQDSDASMIDFEPSMGTSSAAGTPLAAPSSPQSGPQ. The span at 225–237 shows a compositional bias: low complexity; it reads PLAAPSSPQSGPQ. HEAT repeat units follow at residues 242-279, 339-376, 434-472, 479-516, 525-560, 598-637, 670-708, 710-744, 780-817, and 822-867; these read NALP…VRYG, PFLI…ALTP, LSFE…LCSR, NWVR…NPNT, MKNL…GNAQ, GSGL…NVGV, GASC…GNVK, YLPT…MVRR, LDPP…DSRD, and VLRP…HLGE.

This sequence belongs to the CAND family. In terms of assembly, interacts with candA-N. Interacts with unneddylated cullins culA and culD.

Its subcellular location is the nucleus. In terms of biological role, assembly factor of SCF (SKP1-CUL1-F-box protein) E3 ubiquitin ligase complexes that promotes the exchange of the substrate-recognition F-box subunit in SCF complexes, thereby playing a key role in the cellular repertoire of SCF complexes. Acts as a F-box protein exchange factor when interacting with candA-N. This Emericella nidulans (strain FGSC A4 / ATCC 38163 / CBS 112.46 / NRRL 194 / M139) (Aspergillus nidulans) protein is Cullin-associated NEDD8-dissociated protein 1, C-terminal part (candA-C).